Reading from the N-terminus, the 967-residue chain is RNA polymerase-associated protein RapA (967 aa).

The Helicase ATP-binding domain occupies 163–333 (EVGQRHAPRV…FARLRLLDPN (171 aa)). ATP is bound at residue 176 to 183 (DEVGLGKT). The short motif at 279 to 282 (DEAH) is the DEAH box element. The Helicase C-terminal domain occupies 489-677 (RVEWLLNYLT…TCRQQHDSLK (189 aa)).

This sequence belongs to the SNF2/RAD54 helicase family. RapA subfamily. As to quaternary structure, interacts with the RNAP. Has a higher affinity for the core RNAP than for the holoenzyme. Its ATPase activity is stimulated by binding to RNAP.

In terms of biological role, transcription regulator that activates transcription by stimulating RNA polymerase (RNAP) recycling in case of stress conditions such as supercoiled DNA or high salt concentrations. Probably acts by releasing the RNAP, when it is trapped or immobilized on tightly supercoiled DNA. Does not activate transcription on linear DNA. Probably not involved in DNA repair. The sequence is that of RNA polymerase-associated protein RapA from Pectobacterium atrosepticum (strain SCRI 1043 / ATCC BAA-672) (Erwinia carotovora subsp. atroseptica).